A 134-amino-acid chain; its full sequence is Acyl carrier protein, chloroplastic (134 aa).

Residues Met1 to Cys51 constitute a chloroplast transit peptide. The Carrier domain occupies Gln55–Met130. At Ser90 the chain carries O-(pantetheine 4'-phosphoryl)serine.

The protein belongs to the acyl carrier protein (ACP) family. 4'-phosphopantetheine is transferred from CoA to a specific serine of apo-ACP by acpS. This modification is essential for activity because fatty acids are bound in thioester linkage to the sulfhydryl of the prosthetic group. As to expression, seed.

It is found in the plastid. Its subcellular location is the chloroplast. Its pathway is lipid metabolism; fatty acid biosynthesis. In terms of biological role, carrier of the growing fatty acid chain in fatty acid biosynthesis. In Brassica napus (Rape), this protein is Acyl carrier protein, chloroplastic (ACL1.C1).